Here is a 230-residue protein sequence, read N- to C-terminus: Small ribosomal subunit protein uS3 (230 aa).

Residues 39 to 107 (VREYLFKRLK…PVHINIEEVR (69 aa)) form the KH type-2 domain.

It belongs to the universal ribosomal protein uS3 family. Part of the 30S ribosomal subunit. Forms a tight complex with proteins S10 and S14.

In terms of biological role, binds the lower part of the 30S subunit head. Binds mRNA in the 70S ribosome, positioning it for translation. The polypeptide is Small ribosomal subunit protein uS3 (Alcanivorax borkumensis (strain ATCC 700651 / DSM 11573 / NCIMB 13689 / SK2)).